The primary structure comprises 390 residues: tRNA-specific 2-thiouridylase MnmA (390 aa).

Residues 29–36 and L55 contribute to the ATP site; that span reads GLSGGVDS. Catalysis depends on C116, which acts as the Nucleophile. C116 and C225 are oxidised to a cystine. Residue G141 participates in ATP binding. The segment at 175–177 is interaction with tRNA; sequence KDQ. C225 (cysteine persulfide intermediate) is an active-site residue. The interaction with tRNA stretch occupies residues 330–331; it reads RY.

Belongs to the MnmA/TRMU family.

The protein resides in the cytoplasm. The catalysed reaction is S-sulfanyl-L-cysteinyl-[protein] + uridine(34) in tRNA + AH2 + ATP = 2-thiouridine(34) in tRNA + L-cysteinyl-[protein] + A + AMP + diphosphate + H(+). Catalyzes the 2-thiolation of uridine at the wobble position (U34) of tRNA, leading to the formation of s(2)U34. The protein is tRNA-specific 2-thiouridylase MnmA of Prochlorococcus marinus (strain MIT 9515).